Here is a 112-residue protein sequence, read N- to C-terminus: MSDTLAQLADVLAARRHADPESSYVAKLHAKGLNKILEKVGEEATETLLAAKDAEHGDDATRQAVVAETADLWFHSLVMLSHLDIDHQAVLDELARRFGVSGLDEKAARQSR.

This sequence belongs to the PRA-PH family.

The protein resides in the cytoplasm. The catalysed reaction is 1-(5-phospho-beta-D-ribosyl)-ATP + H2O = 1-(5-phospho-beta-D-ribosyl)-5'-AMP + diphosphate + H(+). Its pathway is amino-acid biosynthesis; L-histidine biosynthesis; L-histidine from 5-phospho-alpha-D-ribose 1-diphosphate: step 2/9. This chain is Phosphoribosyl-ATP pyrophosphatase, found in Chromohalobacter salexigens (strain ATCC BAA-138 / DSM 3043 / CIP 106854 / NCIMB 13768 / 1H11).